The chain runs to 103 residues: Protein Rev (103 aa).

Phosphoserine; by host CK2 is present on Ser5. The segment at 17 to 25 is homomultimerization; sequence IIKILYQSN. Disordered regions lie at residues 24-49 and 82-103; these read SNPC…RRQA and IRDP…TKDN. Positions 33–49 match the Nuclear localization signal and RNA-binding (RRE) motif; it reads SRNARKNRRRRWRRRQA. Positions 35–48 are enriched in basic residues; it reads NARKNRRRRWRRRQ. The Nuclear export signal and binding to XPO1 motif lies at 72 to 83; it reads VDLPPLEQLNIR.

This sequence belongs to the HIV-1 REV protein family. In terms of assembly, homomultimer; when bound to the RRE. Multimeric assembly is essential for activity and may involve XPO1. Binds to human KPNB1, XPO1, TNPO1, RANBP5 and IPO7. Interacts with the viral Integrase. Interacts with human KHDRBS1. Interacts with human NAP1; this interaction decreases Rev multimerization and stimulates its activity. Interacts with human DEAD-box helicases DDX3 and DDX24; these interactions may serve for viral RNA export to the cytoplasm and packaging, respectively. Interacts with human PSIP1; this interaction may inhibit HIV-1 DNA integration by promoting dissociation of the Integrase-LEDGF/p75 complex. Asymmetrically arginine dimethylated at one site by host PRMT6. Methylation impairs the RNA-binding activity and export of viral RNA from the nucleus to the cytoplasm. Post-translationally, phosphorylated by protein kinase CK2. Presence of, and maybe binding to the N-terminus of the regulatory beta subunit of CK2 is necessary for CK2-mediated Rev's phosphorylation.

Its subcellular location is the host nucleus. It localises to the host nucleolus. The protein localises to the host cytoplasm. Its function is as follows. Escorts unspliced or incompletely spliced viral pre-mRNAs (late transcripts) out of the nucleus of infected cells. These pre-mRNAs carry a recognition sequence called Rev responsive element (RRE) located in the env gene, that is not present in fully spliced viral mRNAs (early transcripts). This function is essential since most viral proteins are translated from unspliced or partially spliced pre-mRNAs which cannot exit the nucleus by the pathway used by fully processed cellular mRNAs. Rev itself is translated from a fully spliced mRNA that readily exits the nucleus. Rev's nuclear localization signal (NLS) binds directly to KPNB1/Importin beta-1 without previous binding to KPNA1/Importin alpha-1. KPNB1 binds to the GDP bound form of RAN (Ran-GDP) and targets Rev to the nucleus. In the nucleus, the conversion from Ran-GDP to Ran-GTP dissociates Rev from KPNB1 and allows Rev's binding to the RRE in viral pre-mRNAs. Rev multimerization on the RRE via cooperative assembly exposes its nuclear export signal (NES) to the surface. Rev can then form a complex with XPO1/CRM1 and Ran-GTP, leading to nuclear export of the complex. Conversion from Ran-GTP to Ran-GDP mediates dissociation of the Rev/RRE/XPO1/RAN complex, so that Rev can return to the nucleus for a subsequent round of export. Beside KPNB1, also seems to interact with TNPO1/Transportin-1, RANBP5/IPO5 and IPO7/RANBP7 for nuclear import. The nucleoporin-like HRB/RIP is an essential cofactor that probably indirectly interacts with Rev to release HIV RNAs from the perinuclear region to the cytoplasm. This is Protein Rev from Human immunodeficiency virus type 1 group O (isolate MVP5180) (HIV-1).